We begin with the raw amino-acid sequence, 1062 residues long: Cell division control protein 7 (1062 aa).

One can recognise a Protein kinase domain in the interval 9 to 259 (ITLGDCLGKG…TRKLLKHPWV (251 aa)). Residues 15–23 (LGKGAFGAV) and Lys-38 contribute to the ATP site. Catalysis depends on Asp-131, which acts as the Proton acceptor. 2 stretches are compositionally biased toward polar residues: residues 296 to 310 (NRINPTLHSGRQSSY) and 376 to 394 (AFNSDQISESNNFNASPLS). 3 disordered regions span residues 296–331 (NRINPTLHSGRQSSYHMPESPKTPIAESPDHDNWDN), 361–394 (NNSSSITSSPSKSRHAFNSDQISESNNFNASPLS), and 1038–1062 (NEHKSPISKPHMPPPRWQPKQPLTQ).

The protein belongs to the protein kinase superfamily. Ser/Thr protein kinase family. CDC7 subfamily. Interacts with spg1. Seems to interact with cdc11. It depends on Mg(2+) as a cofactor.

The catalysed reaction is L-seryl-[protein] + ATP = O-phospho-L-seryl-[protein] + ADP + H(+). The enzyme catalyses L-threonyl-[protein] + ATP = O-phospho-L-threonyl-[protein] + ADP + H(+). In terms of biological role, protein kinase essential for cell division. Plays a key role in initiation of septum formation and cytokinesis. The sequence is that of Cell division control protein 7 (cdc7) from Schizosaccharomyces pombe (strain 972 / ATCC 24843) (Fission yeast).